Here is a 69-residue protein sequence, read N- to C-terminus: Chondroitin proteoglycan 9 (69 aa).

Residues 1-19 (MHLWQLVLLVILFFGAAFG) form the signal peptide. Residues Ser-25 and Ser-27 are each glycosylated (O-linked (Xyl...) (chondroitin sulfate) serine).

This is Chondroitin proteoglycan 9 from Caenorhabditis elegans.